A 334-amino-acid chain; its full sequence is rRNA 2'-O-methyltransferase fibrillarin (334 aa).

Positions 1 to 93 (MEGRGGSRGG…GGKPAAGGKP (93 aa)) are enriched in gly residues. Residues 1 to 94 (MEGRGGSRGG…GKPAAGGKPG (94 aa)) form a disordered region. Residues 184–185 (TT), 203–204 (EL), 228–229 (DA), and 248–251 (DVAQ) contribute to the S-adenosyl-L-methionine site.

The protein belongs to the methyltransferase superfamily. Fibrillarin family. In terms of assembly, component of box C/D small nucleolar ribonucleoprotein (snoRNP) particles. It is associated with the U3, U8 and U13 small nuclear RNAs. Part of the small subunit (SSU) processome, composed of more than 70 proteins and the RNA chaperone small nucleolar RNA (snoRNA) U3. Post-translationally, by homology to other fibrillarins, some or all of the N-terminal domain arginines are modified to asymmetric dimethylarginine (DMA).

It is found in the nucleus. The protein resides in the nucleolus. It carries out the reaction L-glutaminyl-[histone H2A] + S-adenosyl-L-methionine = N(5)-methyl-L-glutaminyl-[histone H2A] + S-adenosyl-L-homocysteine + H(+). In terms of biological role, S-adenosyl-L-methionine-dependent methyltransferase that has the ability to methylate both RNAs and proteins. Involved in pre-rRNA processing. Utilizes the methyl donor S-adenosyl-L-methionine to catalyze the site-specific 2'-hydroxyl methylation of ribose moieties in pre-ribosomal RNA. Site specificity is provided by a guide RNA that base pairs with the substrate. Methylation occurs at a characteristic distance from the sequence involved in base pairing with the guide RNA. Also acts as a protein methyltransferase by mediating methylation of 'Gln-105' of histone H2A (H2AQ105me), a modification that impairs binding of the FACT complex and is specifically present at 35S ribosomal DNA locus. Part of the small subunit (SSU) processome, first precursor of the small eukaryotic ribosomal subunit. During the assembly of the SSU processome in the nucleolus, many ribosome biogenesis factors, an RNA chaperone and ribosomal proteins associate with the nascent pre-rRNA and work in concert to generate RNA folding, modifications, rearrangements and cleavage as well as targeted degradation of pre-ribosomal RNA by the RNA exosome. The chain is rRNA 2'-O-methyltransferase fibrillarin (fbl) from Dictyostelium discoideum (Social amoeba).